The primary structure comprises 129 residues: UPF0325 protein ESA_03178 (129 aa).

This sequence belongs to the UPF0325 family.

In Cronobacter sakazakii (strain ATCC BAA-894) (Enterobacter sakazakii), this protein is UPF0325 protein ESA_03178.